We begin with the raw amino-acid sequence, 89 residues long: Small ribosomal subunit protein uS15 (89 aa).

This sequence belongs to the universal ribosomal protein uS15 family. As to quaternary structure, part of the 30S ribosomal subunit. Forms a bridge to the 50S subunit in the 70S ribosome, contacting the 23S rRNA.

One of the primary rRNA binding proteins, it binds directly to 16S rRNA where it helps nucleate assembly of the platform of the 30S subunit by binding and bridging several RNA helices of the 16S rRNA. Its function is as follows. Forms an intersubunit bridge (bridge B4) with the 23S rRNA of the 50S subunit in the ribosome. The polypeptide is Small ribosomal subunit protein uS15 (Frankia alni (strain DSM 45986 / CECT 9034 / ACN14a)).